The chain runs to 370 residues: Ubiquinone biosynthesis O-methyltransferase, mitochondrial (370 aa).

Residues 1 to 86 (MWGGSKLSSS…SYRLPWTRPY (86 aa)) constitute a mitochondrion transit peptide. S-adenosyl-L-methionine is bound at residue Arg125. Residues Lys144 and Lys150 each carry the N6-acetyllysine modification. Residues Gly155 and Asp176 each coordinate S-adenosyl-L-methionine. An N6-acetyllysine modification is found at Lys197. Ser223 provides a ligand contact to S-adenosyl-L-methionine. 3 residues coordinate Mg(2+): Glu224, Glu227, and His228.

The protein belongs to the class I-like SAM-binding methyltransferase superfamily. UbiG/COQ3 family. Component of a multi-subunit COQ enzyme complex, composed of at least COQ3, COQ4, COQ5, COQ6, COQ7 and COQ9. Mg(2+) is required as a cofactor.

Its subcellular location is the mitochondrion inner membrane. The enzyme catalyses 3,4-dihydroxy-5-(all-trans-decaprenyl)benzoate + S-adenosyl-L-methionine = 4-hydroxy-3-methoxy-5-(all-trans-decaprenyl)benzoate + S-adenosyl-L-homocysteine + H(+). It carries out the reaction a 3-demethylubiquinone + S-adenosyl-L-methionine = a ubiquinone + S-adenosyl-L-homocysteine. The catalysed reaction is 3-demethylubiquinol-10 + S-adenosyl-L-methionine = ubiquinol-10 + S-adenosyl-L-homocysteine + H(+). It participates in cofactor biosynthesis; ubiquinone biosynthesis. Its function is as follows. O-methyltransferase required for two non-consecutive steps during ubiquinone biosynthesis. Catalyzes the 2 O-methylation of 3,4-dihydroxy-5-(all-trans-decaprenyl)benzoic acid into 4-hydroxy-3-methoxy-5-(all-trans-decaprenyl)benzoic acid. Also catalyzes the last step of ubiquinone biosynthesis by mediating methylation of 3-demethylubiquinone into ubiquinone. Also able to mediate the methylation of 3-demethylubiquinol-10 into ubiquinol-10. The chain is Ubiquinone biosynthesis O-methyltransferase, mitochondrial from Bos taurus (Bovine).